Here is a 33-residue protein sequence, read N- to C-terminus: Photosystem II reaction center protein T (33 aa).

The helical transmembrane segment at 3–23 (ALVYTFLLVSTLGIIFFAIFF) threads the bilayer.

Belongs to the PsbT family. As to quaternary structure, PSII is composed of 1 copy each of membrane proteins PsbA, PsbB, PsbC, PsbD, PsbE, PsbF, PsbH, PsbI, PsbJ, PsbK, PsbL, PsbM, PsbT, PsbY, PsbZ, Psb30/Ycf12, at least 3 peripheral proteins of the oxygen-evolving complex and a large number of cofactors. It forms dimeric complexes.

The protein localises to the plastid. The protein resides in the chloroplast thylakoid membrane. In terms of biological role, found at the monomer-monomer interface of the photosystem II (PS II) dimer, plays a role in assembly and dimerization of PSII. PSII is a light-driven water plastoquinone oxidoreductase, using light energy to abstract electrons from H(2)O, generating a proton gradient subsequently used for ATP formation. This is Photosystem II reaction center protein T from Helianthus annuus (Common sunflower).